We begin with the raw amino-acid sequence, 251 residues long: Zinc import ATP-binding protein ZnuC (251 aa).

Residues 5 to 220 (VSLENVSVSF…PEFISMFGPR (216 aa)) form the ABC transporter domain. Residue 37–44 (GPNGAGKS) coordinates ATP.

It belongs to the ABC transporter superfamily. Zinc importer (TC 3.A.1.15.5) family. As to quaternary structure, the complex is composed of two ATP-binding proteins (ZnuC), two transmembrane proteins (ZnuB) and a solute-binding protein (ZnuA).

The protein localises to the cell inner membrane. The catalysed reaction is Zn(2+)(out) + ATP(in) + H2O(in) = Zn(2+)(in) + ADP(in) + phosphate(in) + H(+)(in). In terms of biological role, part of the ABC transporter complex ZnuABC involved in zinc import. Responsible for energy coupling to the transport system. In Salmonella typhi, this protein is Zinc import ATP-binding protein ZnuC.